We begin with the raw amino-acid sequence, 308 residues long: Ecto-ADP-ribosyltransferase 5 (308 aa).

An N-terminal signal peptide occupies residues 1–23; that stretch reads MILEDLLMVLSCLALHILWKVQA. Cysteine 43 and cysteine 259 are joined by a disulfide. Positions 63–253 constitute a TR mART core domain; it reads ALLRESWEAA…IVTLWSYNQT (191 aa). Tyrosine 100 lines the NAD(+) pocket. Residue asparagine 102 is glycosylated (N-linked (GlcNAc...) asparagine). Arginine 161 and glutamine 181 together coordinate NAD(+). Residue arginine 161 is part of the active site. Serine 184 is an active-site residue. Asparagine 197 carries an N-linked (GlcNAc...) asparagine glycan. NAD(+) is bound at residue serine 215. Residue glutamate 222 is part of the active site. A glycan (N-linked (GlcNAc...) asparagine) is linked at asparagine 251.

This sequence belongs to the Arg-specific ADP-ribosyltransferase family.

The protein resides in the secreted. It is found in the membrane. The catalysed reaction is L-arginyl-[protein] + NAD(+) = N(omega)-(ADP-D-ribosyl)-L-arginyl-[protein] + nicotinamide + H(+). This chain is Ecto-ADP-ribosyltransferase 5 (Art5), found in Rattus norvegicus (Rat).